A 790-amino-acid polypeptide reads, in one-letter code: Sorting nexin mvp1 (790 aa).

Polar residues-rich tracts occupy residues 1–10 and 20–40; these read MSLFGSSPPN and KTANSSRSTLFDNEAPTTRSG. Disordered stretches follow at residues 1–62, 215–342, and 373–406; these read MSLF…RKQR, PNLS…SIHN, and AITGPFGDSGGPGQSVSGSVGGSNPNRSIGHVRS. Positions 225–240 are enriched in pro residues; the sequence is PQRPVTPPKAPTPSPP. Low complexity predominate over residues 241-252; sequence KQQQQQQHQPPT. Residues 269–283 show a composition bias toward basic and acidic residues; sequence DLHKGHNHGPLEHST. Over residues 297-319 the composition is skewed to polar residues; that stretch reads NDLNGNDAVSYSTSPEVTTTSSA. Low complexity-rich tracts occupy residues 324–339 and 386–400; these read TTSTFTTSQPPSGPSS and QSVSGSVGGSNPNRS. The 115-residue stretch at 411–525 folds into the PX domain; the sequence is EENILVTLMP…IMFLTVPTEL (115 aa). 4 residues coordinate a 1,2-diacyl-sn-glycero-3-phospho-(1D-myo-inositol-3-phosphate): R447, S449, K473, and R492.

The protein belongs to the sorting nexin family.

Its subcellular location is the cytoplasm. The protein resides in the membrane. Its function is as follows. Required for vacuolar protein sorting. This Neurospora crassa (strain ATCC 24698 / 74-OR23-1A / CBS 708.71 / DSM 1257 / FGSC 987) protein is Sorting nexin mvp1 (vsp-1).